A 172-amino-acid polypeptide reads, in one-letter code: Acetolactate synthase small subunit (172 aa).

The 75-residue stretch at 4–78 folds into the ACT domain; sequence TLSVLVEDEA…NILKVDNITE (75 aa).

The protein belongs to the acetolactate synthase small subunit family. In terms of assembly, dimer of large and small chains.

The protein localises to the plastid. Its subcellular location is the chloroplast. The catalysed reaction is 2 pyruvate + H(+) = (2S)-2-acetolactate + CO2. It functions in the pathway amino-acid biosynthesis; L-isoleucine biosynthesis; L-isoleucine from 2-oxobutanoate: step 1/4. It participates in amino-acid biosynthesis; L-valine biosynthesis; L-valine from pyruvate: step 1/4. The sequence is that of Acetolactate synthase small subunit (ilvH) from Cyanidium caldarium (Red alga).